Consider the following 582-residue polypeptide: BTB/POZ domain and ankyrin repeat-containing protein NPR1 (582 aa).

The span at 1-18 (MEPPTSHVTNAFSDSDSA) shows a compositional bias: polar residues. A disordered region spans residues 1–25 (MEPPTSHVTNAFSDSDSASVEEGGA). Residues 55–140 (ADARIAVPGG…VLDYLYSGRV (86 aa)) enclose the BTB domain. The C2HC NPR-type zinc-finger motif lies at 147 to 161 (ACLCVDEDCAHVGCH). Zn(2+)-binding residues include cysteine 150, cysteine 155, histidine 157, and cysteine 160. ANK repeat units follow at residues 229–258 (RSNL…SLGL), 269–299 (KHVR…NLDD), 301–328 (FALH…DVNH), and 332–361 (RGYT…RPAD). The tract at residues 391–526 (PSPKDRLCIE…VLDKIMDDET (136 aa)) is salicylic acid-binding core (SBC). Arginine 436 lines the salicylate pocket. The interval 551–582 (QKAFHEDKEENDRSGLSSSSSSTSIGAIRPRR) is disordered. Basic and acidic residues predominate over residues 553 to 563 (AFHEDKEENDR). Positions 564–574 (SGLSSSSSSTS) are enriched in low complexity.

Belongs to the plant 'ANKYRIN-BTB/POZ' family. 'NPR1-like' subfamily. In terms of assembly, oligomer in an uninduced state; disulfide-linked. Forms activated monomer upon changes in cellular redox potential. Interacts with TGA2.1, TGA2.2, TGA2.3, LG2, TGAL1 and TGAL4. Interacts with NRR, RH1, RH2 and RH3.

It localises to the cytoplasm. The protein resides in the nucleus. It is found in the nuclear body. It participates in protein modification; protein ubiquitination. In terms of biological role, salicylic acid (SA)-binding substrate-specific adapter of an E3 ubiquitin-protein ligase complex (CUL3-RBX1-BTB) which mediates the ubiquitination and subsequent proteasomal degradation of target proteins. Transcription cofactor that represses gene expression in the absence of salicylic acid (SA), when attached to negative cis-elements (W-box) with WRKY transcription factors, but stimulates gene expression upon activation by SA, when sumoylated and attached to positive cis-elements (as-1) with TGA transcription factors, thus confering immunity through a series of gene regulations ending in a significant increase in antimicrobial and defense genes expression. Key positive factor of disease resistance. Plays an essential role in benzothiadiazole (BTH)-induced resistance to the blast fungus disease caused by Magnaporthe oryzae. Involved in defense response against the bacterial blight disease caused by Xanthomonas oryzae pv. oryzae (Xoo). Over-expression of NPR1/NH1 confers disease resistance to Xoo, but also enhances herbivore susceptibility. Functions as a transcriptional coactivator of TGA2.1 and LG2 in vitro. Involved in defense response against herbivore. Plants silencing NPR1/NH1 have increased herbivore-induced trypsin proteinase inhibitors and volatiles, which reduces the performance of the striped stem borer (SSB) Chilo suppressalis. This is BTB/POZ domain and ankyrin repeat-containing protein NPR1 from Oryza sativa subsp. japonica (Rice).